The sequence spans 336 residues: tRNA N6-adenosine threonylcarbamoyltransferase (336 aa).

Fe cation-binding residues include histidine 114 and histidine 118. Substrate is bound by residues 136 to 140 (LVSGG), aspartate 169, glycine 182, aspartate 186, and asparagine 275. Residue aspartate 301 participates in Fe cation binding.

Belongs to the KAE1 / TsaD family. Fe(2+) is required as a cofactor.

It is found in the cytoplasm. The enzyme catalyses L-threonylcarbamoyladenylate + adenosine(37) in tRNA = N(6)-L-threonylcarbamoyladenosine(37) in tRNA + AMP + H(+). In terms of biological role, required for the formation of a threonylcarbamoyl group on adenosine at position 37 (t(6)A37) in tRNAs that read codons beginning with adenine. Is involved in the transfer of the threonylcarbamoyl moiety of threonylcarbamoyl-AMP (TC-AMP) to the N6 group of A37, together with TsaE and TsaB. TsaD likely plays a direct catalytic role in this reaction. In Streptococcus pneumoniae serotype 2 (strain D39 / NCTC 7466), this protein is tRNA N6-adenosine threonylcarbamoyltransferase.